Reading from the N-terminus, the 232-residue chain is LexA repressor (232 aa).

Positions 35–55 (IREIGDAAGLQSTSSVAYQLK) form a DNA-binding region, H-T-H motif. A compositionally biased stretch (basic and acidic residues) spans 61-85 (GFLRRDPNKPRAVDVRHLPETESRS). The disordered stretch occupies residues 61–104 (GFLRRDPNKPRAVDVRHLPETESRSSKAATQAKSKAPQAGVHDP). Residues 86–99 (SKAATQAKSKAPQA) are compositionally biased toward low complexity. Active-site for autocatalytic cleavage activity residues include Ser-156 and Lys-193.

The protein belongs to the peptidase S24 family. Homodimer.

It catalyses the reaction Hydrolysis of Ala-|-Gly bond in repressor LexA.. Functionally, represses a number of genes involved in the response to DNA damage (SOS response), including recA and lexA. In the presence of single-stranded DNA, RecA interacts with LexA causing an autocatalytic cleavage which disrupts the DNA-binding part of LexA, leading to derepression of the SOS regulon and eventually DNA repair. The sequence is that of LexA repressor from Corynebacterium glutamicum (strain ATCC 13032 / DSM 20300 / JCM 1318 / BCRC 11384 / CCUG 27702 / LMG 3730 / NBRC 12168 / NCIMB 10025 / NRRL B-2784 / 534).